Consider the following 157-residue polypeptide: Small ribosomal subunit protein uS7 (157 aa).

The protein belongs to the universal ribosomal protein uS7 family. Part of the 30S ribosomal subunit. Contacts proteins S9 and S11.

Its function is as follows. One of the primary rRNA binding proteins, it binds directly to 16S rRNA where it nucleates assembly of the head domain of the 30S subunit. Is located at the subunit interface close to the decoding center, probably blocks exit of the E-site tRNA. The protein is Small ribosomal subunit protein uS7 of Chlamydia abortus (strain DSM 27085 / S26/3) (Chlamydophila abortus).